The following is a 177-amino-acid chain: Nucleoside triphosphate/diphosphate phosphatase (177 aa).

R23 acts as the Proton donor in catalysis. Residues N87, D103, D105, D107, D120, and E123 each contribute to the Mg(2+) site.

It belongs to the Ntdp family. It depends on Mg(2+) as a cofactor.

The enzyme catalyses a ribonucleoside 5'-triphosphate + H2O = a ribonucleoside 5'-diphosphate + phosphate + H(+). It catalyses the reaction a ribonucleoside 5'-diphosphate + H2O = a ribonucleoside 5'-phosphate + phosphate + H(+). In terms of biological role, has nucleoside phosphatase activity towards nucleoside triphosphates and nucleoside diphosphates. In Streptococcus pneumoniae (strain ATCC 700669 / Spain 23F-1), this protein is Nucleoside triphosphate/diphosphate phosphatase.